Reading from the N-terminus, the 168-residue chain is Transcription antitermination protein NusB (168 aa).

Belongs to the NusB family.

Functionally, involved in transcription antitermination. Required for transcription of ribosomal RNA (rRNA) genes. Binds specifically to the boxA antiterminator sequence of the ribosomal RNA (rrn) operons. The chain is Transcription antitermination protein NusB from Bradyrhizobium sp. (strain ORS 278).